Here is a 206-residue protein sequence, read N- to C-terminus: Glutathione S-transferase 1 (206 aa).

Residues 2 to 79 (PQYKLTYFDI…YLGRQFGLAG (78 aa)) enclose the GST N-terminal domain. Glutathione-binding positions include Tyr8, Trp39, Lys43, 49–51 (GQL), and 63–64 (QS). The GST C-terminal domain occupies 81–206 (TPMEEAQVDS…WIAERPKTPY (126 aa)).

The protein belongs to the GST superfamily. Sigma family.

The catalysed reaction is RX + glutathione = an S-substituted glutathione + a halide anion + H(+). Functionally, conjugation of reduced glutathione to a wide number of exogenous and endogenous hydrophobic electrophiles. Can also function as a GSH peroxidase. The polypeptide is Glutathione S-transferase 1 (GST1) (Ascaris suum (Pig roundworm)).